We begin with the raw amino-acid sequence, 2698 residues long: Zinc finger protein 292 (2698 aa).

The C2H2-type 1 zinc-finger motif lies at 567–589 (YSCPICAKNFNSKDSFVPHVTLH). Residue Ser654 is modified to Phosphoserine. C2H2-type zinc fingers lie at residues 681–705 (FNCPVTFCKKGFKYFKNLIAHVKGH), 722–744 (VICQYCRRHFVSVTHLNDHLQMH), 750–774 (YICIQMKCKAGFNSYAELLAHRKEH), 779–803 (AKCLFPKCGRIFSQAYLLYDHEAQH), 807–831 (YTCKFTGCGKVYRSQSEMEKHQDGH), and 1085–1110 (FSCQVEGCTRTYNSSQSIGKHMKTAH). Residues 822-834 (SEMEKHQDGHSHP) are compositionally biased toward basic and acidic residues. The interval 822–894 (SEMEKHQDGH…AEPAVTKHGQ (73 aa)) is disordered. The residue at position 1104 (Lys1104) is an N6-acetyllysine. Phosphoserine is present on Ser1146. Residues 1278–1325 (NSTNHYPSQTDGNINSSFLKGGSSENGVFPSQVSSADDFSSTSAQPST) show a composition bias toward polar residues. A disordered region spans residues 1278–1349 (NSTNHYPSQT…KERKPKHNKR (72 aa)). Residues 1361-1383 (FICSRCYRAFTNPRSLGGHLSKR) form a C2H2-type 8; degenerate zinc finger. 2 stretches are compositionally biased toward polar residues: residues 1574–1603 (FSSSTEPPQNFTNNSAHVSVISGPQNTRSS) and 1624–1633 (SVSNTSQNVL). Residues 1574-1656 (FSSSTEPPQN…PVPDTNTRSD (83 aa)) are disordered. C2H2-type zinc fingers lie at residues 1879–1904 (FVCQNQGCNYSAMTKDALFKHYGKIH) and 1924–1949 (FKCVVPSCTKTFTRNSNLRAHCQLVH). A disordered region spans residues 1964-1997 (PYGRKSQSENLSSPQNNQVKKQPSMAEETKTESQ). Polar residues predominate over residues 1971–1984 (SENLSSPQNNQVKK). N6-acetyllysine is present on Lys2020. Over residues 2021–2032 (QLAEKKSPEKPE) the composition is skewed to basic and acidic residues. The disordered stretch occupies residues 2021–2075 (QLAEKKSPEKPESSSQPVTSSAEQYNANLANLKTKGRKNKRHRKEKEEKREKNPV). Residues 2038–2051 (VTSSAEQYNANLAN) are compositionally biased toward polar residues. Basic residues predominate over residues 2054–2064 (TKGRKNKRHRK). C2H2-type zinc fingers lie at residues 2091–2116 (YCCVHQGCFAAFTIQQNLILHYQAVH), 2149–2174 (FRCQVSDCSRIFQAITGLIQHYMKLH), 2193–2218 (FPCDQLECKLSFTTYLSYVVHLEVDH), and 2233–2258 (YKCDCEGCDRIYATRSNLLRHIFNKH). A compositionally biased stretch (basic residues) spans 2262-2271 (HKAHLIRPRK). Residues 2262–2323 (HKAHLIRPRK…KSNLENKSAK (62 aa)) are disordered. The C2H2-type 15 zinc finger occupies 2362-2386 (YPCMIKGCTSVVTSESNIIRHYKCH). Disordered stretches follow at residues 2411–2454 (GKEI…GEKD), 2467–2553 (LINE…EEHP), and 2580–2608 (KQKKNSDRDHSNSGSKRGSHSSSRRHVDK). The span at 2421-2437 (KNDKKDPDSSVLEKNDN) shows a compositional bias: basic and acidic residues. Residues 2470-2488 (EDSTNAENQGNTTLKGNNE) are compositionally biased toward polar residues. Basic and acidic residues-rich tracts occupy residues 2489 to 2501 (FQEHDSCTSERQK) and 2580 to 2590 (KQKKNSDRDHS). Residues 2596 to 2606 (RGSHSSSRRHV) are compositionally biased toward basic residues.

The protein belongs to the krueppel C2H2-type zinc-finger protein family. As to expression, expressed in postnatal day 1 (P1) pituitary. Also detected in presomatotrophic cell line GHFT1-5.

It is found in the nucleus. May be involved in transcriptional regulation. The chain is Zinc finger protein 292 from Mus musculus (Mouse).